Reading from the N-terminus, the 542-residue chain is MATELKEYLVIIPDLPDVLAKRQVLLKPHNQDAAPLVKAGRVPFFGSTLAHHSPEGQQVAENGTVMIIKAESEEEIREIIRKDIFTIEGVWDFGKLSIWPFKIARMRNRRDNSWVVQKFGGTSIGKFPDKTSSDMLCTKFRKESLRNNEQITADCQELLDYTSAAKRFNLDINGKAKDKMVSFGEKLSCRLMVAMLRDRDIPAEYVDLSDIVPSNNLDQLKPEFFHEAAAVFGKRVEACNGRVPVITGFFGTVPGSLIDSGIGRGYSDLCAVLVAIGLHAERVQIWKEVDGIFTADPREVPDARCLPSITPSEAAELTFYGSEVIHHLALSLAIQAKPPVSIFVKNVQKPWGQGTVVVPSDGDDTSSWPIDYLDPSDSDSTSSTALPKMPTAVTIKRDITIFNILSNKQSMSHGFFVKVFTILAEHDISVDLISTSEVHVSMAINSSNMEPSQIKNVQCRLSEEGEVNVLPDMAILSLVGAELKNMTGIAGRMFAILGEQHVNIEMISQGASEINISCVIPDKDATRALNMLHDELFTKSAI.

ACT domains lie at 404-472 and 478-542; these read ILSN…VLPD and LVGA…KSAI.

It belongs to the aspartokinase family.

It catalyses the reaction L-aspartate + ATP = 4-phospho-L-aspartate + ADP. It functions in the pathway mycotoxin biosynthesis. In terms of biological role, aspartate kinase; part of the gene cluster that mediates the biosynthesis of fusaric acid, a mycotoxin with low to moderate toxicity to animals and humans, but with high phytotoxic properties. L-aspartate is suggested as fusaric acid amino acid precursor that is activated and further processed to O-acetyl-L-homoserine by cluster enzymes aspartate kinase FUB3 and homoserine O-acetyltransferase FUB5, as well as enzymes of the primary metabolism. The polyketide synthase (PKS) FUB1 generates the triketide trans-2-hexenal which is presumptively released by the hydrolase FUB4 and linked to the NRPS-bound amino acid precursor by NAD(P)-dependent dehydrogenase FUB6. FUB1, FUB4, and the non-canonical NRPS Fub8 may form an enzyme complex. Further processing of the NRPS-bound intermediate might be carried out by FUB6 and the sulfhydrylase FUB7, enabling a spontaneous electrocyclization to close the carbon backbone of fusaric acid. Dihydrofusaric acid is likely to be released via reduction by the thioester reductase (TR) domain of FUB8 whereupon the final oxidation to fusaric acid may (also) be performed by the FMN-dependent dehydrogenase FUB9. The protein is Aspartate kinase FUB3 of Fusarium oxysporum f. sp. lycopersici (strain 4287 / CBS 123668 / FGSC 9935 / NRRL 34936) (Fusarium vascular wilt of tomato).